Reading from the N-terminus, the 1202-residue chain is DNA-directed RNA polymerase subunit beta (1202 aa).

The segment covering 1151 to 1162 (LRDMDEEDDDVV) has biased composition (acidic residues). The tract at residues 1151–1202 (LRDMDEEDDDVVNVDALSKYAEKQNEKTNASAEEAKAPSTESAPVETKNNQN) is disordered. Polar residues predominate over residues 1189–1202 (STESAPVETKNNQN).

It belongs to the RNA polymerase beta chain family. As to quaternary structure, the RNAP catalytic core consists of 2 alpha, 1 beta, 1 beta' and 1 omega subunit. When a sigma factor is associated with the core the holoenzyme is formed, which can initiate transcription.

It catalyses the reaction RNA(n) + a ribonucleoside 5'-triphosphate = RNA(n+1) + diphosphate. Functionally, DNA-dependent RNA polymerase catalyzes the transcription of DNA into RNA using the four ribonucleoside triphosphates as substrates. The polypeptide is DNA-directed RNA polymerase subunit beta (Pediococcus pentosaceus (strain ATCC 25745 / CCUG 21536 / LMG 10740 / 183-1w)).